Here is a 190-residue protein sequence, read N- to C-terminus: dTTP/UTP pyrophosphatase (190 aa).

The active-site Proton acceptor is the aspartate 70.

Belongs to the Maf family. YhdE subfamily. It depends on a divalent metal cation as a cofactor.

The protein localises to the cytoplasm. The catalysed reaction is dTTP + H2O = dTMP + diphosphate + H(+). It carries out the reaction UTP + H2O = UMP + diphosphate + H(+). Its function is as follows. Nucleoside triphosphate pyrophosphatase that hydrolyzes dTTP and UTP. May have a dual role in cell division arrest and in preventing the incorporation of modified nucleotides into cellular nucleic acids. The protein is dTTP/UTP pyrophosphatase of Paramagnetospirillum magneticum (strain ATCC 700264 / AMB-1) (Magnetospirillum magneticum).